A 197-amino-acid polypeptide reads, in one-letter code: MEARRYGPNIIVTGTPGCGKSSTCEFLKNKLKDYKYYNISDFAKDNDCFEGYDEGRKSHIVDEDKLLDMLEPLLRQGNSIVDWHVNDVFPERLIDLVVVLRCDNSNLYSRLHARGYHDSKIEENLDAEIMGVVKQDAVESYEPHIVVELQSDTKEDMVSNVSRIVAWEKMWLEQHPDGVTNEYQGPRSDDEDDEDSE.

ATP-binding residues include G17, G19, K20, S21, and S22. The NMPbind stretch occupies residues 38–61; that stretch reads NISDFAKDNDCFEGYDEGRKSHIV. Residues 113 to 123 form an LID region; it reads ARGYHDSKIEE. ATP is bound at residue R114. The disordered stretch occupies residues 176 to 197; it reads PDGVTNEYQGPRSDDEDDEDSE. Position 183 is a phosphotyrosine (Y183). Phosphoserine occurs at positions 188 and 196.

It belongs to the adenylate kinase family. AK6 subfamily. In terms of assembly, interacts with small ribosomal subunit protein uS11B/RPS14B. Not a structural component of 43S pre-ribosomes, but transiently interacts with them by binding to uS11/RPS14.

Its subcellular location is the cytoplasm. The protein resides in the nucleus. The catalysed reaction is AMP + ATP = 2 ADP. It carries out the reaction ATP + H2O = ADP + phosphate + H(+). Broad-specificity nucleoside monophosphate (NMP) kinase that catalyzes the reversible transfer of the terminal phosphate group between nucleoside triphosphates and monophosphates. Also has ATPase activity. Involved in the late cytoplasmic maturation steps of the 40S ribosomal particles, specifically 18S rRNA maturation. Required for cleavage of the 20S pre-rRNA at site D in the cytoplasm. While NMP activity is not required for ribosome maturation, ATPase activity is. Associates transiently with small ribosomal subunit protein uS11. ATP hydrolysis breaks the interaction with uS11. May temporarily remove uS11 from the ribosome to enable a conformational change of the ribosomal RNA that is needed for the final maturation step of the small ribosomal subunit. Promotes formation of the rotated state in 80S-like ribosomes, a key intermediate in translocation, thereby releasing the essential assembly factor DIM1 from pre-40S subunits. Its NMP activity may have a role in nuclear energy homeostasis. Involved in oxidative stress response. Required for POS9-dependent target gene transcription upon oxidative stress. This is Adenylate kinase isoenzyme 6 homolog FAP7 from Saccharomyces cerevisiae (strain ATCC 204508 / S288c) (Baker's yeast).